The following is a 616-amino-acid chain: Endonuclease 8-like 3 (616 aa).

The FPG-type zinc finger occupies 271–305 (KVYKRPNCGQCGTKITVCRLGEHNRMTYFCPKCQK). Residues 341-370 (KEEHWACAVCTLINKPSDKQCDACLTLRPE) form a RanBP2-type zinc finger. Residues 491–524 (LKTGHTTSNTIHLSSTISSPQSKMTGDAAAKTGN) form a disordered region. Over residues 494 to 514 (GHTTSNTIHLSSTISSPQSKM) the composition is skewed to polar residues. Positions 527, 530, 553, 561, 574, 576, 599, and 607 each coordinate Zn(2+). 2 GRF-type zinc fingers span residues 527–570 (CSAH…ADLH) and 574–616 (CNHG…AKTE).

Belongs to the FPG family.

The protein resides in the nucleus. It is found in the chromosome. It carries out the reaction 2'-deoxyribonucleotide-(2'-deoxyribose 5'-phosphate)-2'-deoxyribonucleotide-DNA = a 3'-end 2'-deoxyribonucleotide-(2,3-dehydro-2,3-deoxyribose 5'-phosphate)-DNA + a 5'-end 5'-phospho-2'-deoxyribonucleoside-DNA + H(+). Functionally, DNA glycosylase which prefers single-stranded DNA (ssDNA), or partially ssDNA structures such as bubble and fork structures, to double-stranded DNA (dsDNA). Mediates interstrand cross-link repair in response to replication stress: recruited to replication stress sites via interaction with ubiquitinated CMG helicase and acts by mediating DNA glycosylase activity. Cleaves one of the two N-glycosyl bonds comprising the interstrand cross-link, which avoids the formation of a double-strand break but generates an abasic site that is bypassed by translesion synthesis polymerases. This Xenopus laevis (African clawed frog) protein is Endonuclease 8-like 3.